A 118-amino-acid chain; its full sequence is MRSAKLKFEKRRSRIRHKIAKTANRARLSIFKSGRHIYAQIIDDTKSVTIASASTLDEKIKKLKKSHCNVENATKIGELIAEKAVSCGVEEVVFDRSGYKYHGVVKALADAARKKIRF.

The protein belongs to the universal ribosomal protein uL18 family. As to quaternary structure, part of the 50S ribosomal subunit; part of the 5S rRNA/L5/L18/L25 subcomplex. Contacts the 5S and 23S rRNAs.

Its function is as follows. This is one of the proteins that bind and probably mediate the attachment of the 5S RNA into the large ribosomal subunit, where it forms part of the central protuberance. This is Large ribosomal subunit protein uL18 from Rickettsia bellii (strain OSU 85-389).